We begin with the raw amino-acid sequence, 143 residues long: Actinoxanthin (143 aa).

An N-terminal signal peptide occupies residues 1–33 (MSLRHMSRRASRFGVVAVASIGLAAAAQSVAFA). Cystine bridges form between Cys69–Cys78 and Cys119–Cys124.

Belongs to the neocarzinostatin family.

In terms of biological role, binds non-covalently to a chromophore which is the cytotoxic and mutagenic component of the antibiotic. The chromophore binds to DNA as a weak intercalator and causes single- and double-strand breaks. This is Actinoxanthin (axnA) from Streptomyces globisporus.